A 383-amino-acid polypeptide reads, in one-letter code: MNDMVNLLDFDAQGLLAYCESLGEKSFRAKQLQRWIHQSGAADFGEMTDLAKSLREKLATRATIQAPAVISDHLSSDGTRKWLVDVGAGNAVETVYIPEETRGTLCVSSQAGCAVNCRFCSTGKQGFSRNLSTGEIVGQLWMAEFAMRKQLGRGPKDDRVITNVVMMGMGEPLLNYDAVVPAMRLMLDDNAYGLSRRRVTLSTSGVVPMMDRLSQDLPVALAVSLHASNDALRDVLVPLNKKYPLAELMAACRRYLEFAPRDFITFEYCMLDGVNDSVEHARELLRVVADVPCKFNLIPFNPFPESGLKRSNNEQIRRFSQVLLDAGIVTTIRKTRGDDIDAACGQLAGEVKDRTRLAERGKFGKTVPIQVIGADSTHRMGSA.

The active-site Proton acceptor is the E93. The region spanning 99–339 (EETRGTLCVS…TTIRKTRGDD (241 aa)) is the Radical SAM core domain. A disulfide bridge connects residues C106 and C344. Residues C113, C117, and C120 each contribute to the [4Fe-4S] cluster site. S-adenosyl-L-methionine is bound by residues 170 to 171 (GE), S202, 224 to 226 (SLH), and N301. The active-site S-methylcysteine intermediate is the C344.

Belongs to the radical SAM superfamily. RlmN family. It depends on [4Fe-4S] cluster as a cofactor.

The protein resides in the cytoplasm. It catalyses the reaction adenosine(2503) in 23S rRNA + 2 reduced [2Fe-2S]-[ferredoxin] + 2 S-adenosyl-L-methionine = 2-methyladenosine(2503) in 23S rRNA + 5'-deoxyadenosine + L-methionine + 2 oxidized [2Fe-2S]-[ferredoxin] + S-adenosyl-L-homocysteine. The enzyme catalyses adenosine(37) in tRNA + 2 reduced [2Fe-2S]-[ferredoxin] + 2 S-adenosyl-L-methionine = 2-methyladenosine(37) in tRNA + 5'-deoxyadenosine + L-methionine + 2 oxidized [2Fe-2S]-[ferredoxin] + S-adenosyl-L-homocysteine. Its function is as follows. Specifically methylates position 2 of adenine 2503 in 23S rRNA and position 2 of adenine 37 in tRNAs. m2A2503 modification seems to play a crucial role in the proofreading step occurring at the peptidyl transferase center and thus would serve to optimize ribosomal fidelity. The polypeptide is Dual-specificity RNA methyltransferase RlmN (Ralstonia nicotianae (strain ATCC BAA-1114 / GMI1000) (Ralstonia solanacearum)).